A 175-amino-acid polypeptide reads, in one-letter code: Protein-export protein SecB (175 aa).

Residues 153 to 163 (QQQPDAANGND) show a composition bias toward polar residues. Positions 153–175 (QQQPDAANGNDSGIILPPGATRQ) are disordered.

This sequence belongs to the SecB family. As to quaternary structure, homotetramer, a dimer of dimers. One homotetramer interacts with 1 SecA dimer.

Its subcellular location is the cytoplasm. In terms of biological role, one of the proteins required for the normal export of preproteins out of the cell cytoplasm. It is a molecular chaperone that binds to a subset of precursor proteins, maintaining them in a translocation-competent state. It also specifically binds to its receptor SecA. In Bordetella bronchiseptica (strain ATCC BAA-588 / NCTC 13252 / RB50) (Alcaligenes bronchisepticus), this protein is Protein-export protein SecB.